A 194-amino-acid polypeptide reads, in one-letter code: Accessory gene regulator protein B (194 aa).

5 helical membrane-spanning segments follow: residues 44 to 64 (IVVY…LTHL), 80 to 100 (SSLL…YLII), 107 to 127 (FVLL…APAA), 142 to 162 (KILS…TKEP), and 163 to 183 (VNKL…PIFF).

The protein belongs to the AgrB family.

Its subcellular location is the cell membrane. In terms of biological role, essential for the production of a quorum sensing system signal molecule, the autoinducing peptide (AIP). This quorum sensing system is responsible for the regulation of the expression of virulence factor genes. Involved in the proteolytic processing of AgrD, the precursor of AIP. This is Accessory gene regulator protein B from Staphylococcus epidermidis.